A 27-amino-acid chain; its full sequence is M-lycotoxin-Hc2a (27 aa).

As to expression, expressed by the venom gland.

The protein resides in the secreted. Its function is as follows. Forms pore that permeabilize the cell membrane. Promotes efflux of calcium from synaptosomes, causes hemolysis, and dissipates voltage gradients across muscle membrane. Potently inhibits the growth of bacteria, yeast and Leishmania. May function both in the prey capture strategy as well as protection from infectious organisms arising from prey ingestion. This is M-lycotoxin-Hc2a from Hogna carolinensis (Carolina wolf spider).